The following is a 176-amino-acid chain: MLRFLNRCSRGRGAWLLLAFTALALELTALYFQHVMLLKPCVLCIYQRSALWGVFAAGIVGAIAPSSLLRYPAIALWIYSSYEGIRLAWKHTDILLNPSPFTTCDFFVSFPSWLPLDKWLPAIFNATGDCSERQWSFLSMEMPQWLLGIFAAYLLIAVLVLIAQPFRSKRRDLFSR.

Residues 1–14 (MLRFLNRCSRGRGA) lie on the Cytoplasmic side of the membrane. The helical transmembrane segment at 15-31 (WLLLAFTALALELTALY) threads the bilayer. Residues 32 to 49 (FQHVMLLKPCVLCIYQRS) lie on the Periplasmic side of the membrane. Cys41 and Cys44 form a disulfide bridge. The helical transmembrane segment at 50-65 (ALWGVFAAGIVGAIAP) threads the bilayer. The Cytoplasmic segment spans residues 66 to 71 (SSLLRY). Residues 72-89 (PAIALWIYSSYEGIRLAW) form a helical membrane-spanning segment. At 90–144 (KHTDILLNPSPFTTCDFFVSFPSWLPLDKWLPAIFNATGDCSERQWSFLSMEMPQ) the chain is on the periplasmic side. An intrachain disulfide couples Cys104 to Cys130. Residues 145–163 (WLLGIFAAYLLIAVLVLIA) form a helical membrane-spanning segment. The Cytoplasmic segment spans residues 164–176 (QPFRSKRRDLFSR).

The protein belongs to the DsbB family.

It localises to the cell inner membrane. In terms of biological role, required for disulfide bond formation in some periplasmic proteins. Acts by oxidizing the DsbA protein. The chain is Disulfide bond formation protein B from Pectobacterium atrosepticum (strain SCRI 1043 / ATCC BAA-672) (Erwinia carotovora subsp. atroseptica).